The following is a 142-amino-acid chain: Large ribosomal subunit protein mL43 (142 aa).

It belongs to the mitochondrion-specific ribosomal protein mL43 family. Component of the mitochondrial large ribosomal subunit. Mature mitochondrial ribosomes consist of a small (37S) and a large (54S) subunit. The 37S subunit contains at least 33 different proteins and 1 molecule of RNA (15S). The 54S subunit contains at least 45 different proteins and 1 molecule of RNA (21S).

The protein resides in the mitochondrion. This Eremothecium gossypii (strain ATCC 10895 / CBS 109.51 / FGSC 9923 / NRRL Y-1056) (Yeast) protein is Large ribosomal subunit protein mL43 (MRPL51).